The sequence spans 518 residues: Cytochrome P450 704C1 (518 aa).

The next 2 helical transmembrane spans lie at 5 to 25 (ILTM…WIAS) and 299 to 319 (VILN…SWFI). Cys-461 contacts heme.

It belongs to the cytochrome P450 family. Heme is required as a cofactor.

The protein resides in the membrane. The protein is Cytochrome P450 704C1 (CYP704C1) of Pinus taeda (Loblolly pine).